The primary structure comprises 277 residues: Sulfur carrier protein FdhD (277 aa).

Catalysis depends on cysteine 123, which acts as the Cysteine persulfide intermediate. Mo-bis(molybdopterin guanine dinucleotide) is bound at residue 263–268; the sequence is FVRGNK.

It belongs to the FdhD family.

The protein resides in the cytoplasm. Its function is as follows. Required for formate dehydrogenase (FDH) activity. Acts as a sulfur carrier protein that transfers sulfur from IscS to the molybdenum cofactor prior to its insertion into FDH. The chain is Sulfur carrier protein FdhD from Corynebacterium efficiens (strain DSM 44549 / YS-314 / AJ 12310 / JCM 11189 / NBRC 100395).